We begin with the raw amino-acid sequence, 295 residues long: Protease HtpX (295 aa).

Helical transmembrane passes span 4–24 (ILLF…TLSL) and 41–61 (GQLL…SLFI). His-147 provides a ligand contact to Zn(2+). Glu-148 is a catalytic residue. His-151 contacts Zn(2+). Helical transmembrane passes span 158–178 (VTMA…ARII) and 198–218 (FVAT…IVMW). Glu-224 serves as a coordination point for Zn(2+).

It belongs to the peptidase M48B family. Zn(2+) serves as cofactor.

It localises to the cell inner membrane. The sequence is that of Protease HtpX from Pseudomonas entomophila (strain L48).